Reading from the N-terminus, the 291-residue chain is Shikimate dehydrogenase (NADP(+)) (291 aa).

Residues 26–28 and serine 73 each bind shikimate; that span reads SLS. The active-site Proton acceptor is lysine 77. Shikimate is bound by residues asparagine 98 and aspartate 113. Residues 137–141 and valine 238 contribute to the NADP(+) site; that span reads GAGGA. Tyrosine 240 is a shikimate binding site. NADP(+) is bound at residue glycine 261.

This sequence belongs to the shikimate dehydrogenase family. As to quaternary structure, homodimer.

It catalyses the reaction shikimate + NADP(+) = 3-dehydroshikimate + NADPH + H(+). It participates in metabolic intermediate biosynthesis; chorismate biosynthesis; chorismate from D-erythrose 4-phosphate and phosphoenolpyruvate: step 4/7. Involved in the biosynthesis of the chorismate, which leads to the biosynthesis of aromatic amino acids. Catalyzes the reversible NADPH linked reduction of 3-dehydroshikimate (DHSA) to yield shikimate (SA). The chain is Shikimate dehydrogenase (NADP(+)) from Listeria monocytogenes serotype 4b (strain F2365).